Consider the following 441-residue polypeptide: UPF0761 membrane protein Clim_1521 (441 aa).

6 consecutive transmembrane segments (helical) span residues 54–74 (IFLS…PFLA), 122–142 (TVPL…ISTI), 161–181 (AFTL…SSLG), 203–223 (LISF…YMLV), 233–253 (AFSG…WFVF), and 266–286 (GAIS…LVVL).

Belongs to the UPF0761 family.

Its subcellular location is the cell inner membrane. This Chlorobium limicola (strain DSM 245 / NBRC 103803 / 6330) protein is UPF0761 membrane protein Clim_1521.